Here is a 286-residue protein sequence, read N- to C-terminus: MKLAVYGKGGIGKSTTSCNISVALAKRGKKVLQIGCDPKHDSTFTLTGFLIPTIIDTLQEKDYHYEDVWAEDVIYKGYGGVDCVEAGGPPAGAGCGGYVVGETVKLLKELNAFDEYDVILFDVLGDVVCGGFAAPLNYADYCMIVTDNGFDALFAANRIAASVREKARTHPLRLAGLIGNRTAKRDLIEKYVDAVPMPILEVLPLIEDIRVSRVKGKTLFEMAESDPSLNYVCDYYLNIADQILANPEGVVPKDAADRDLFSLLSDFYLNPQQPKTAEEELDLMMV.

ATP is bound by residues 10–15 (GIGKST) and K39. Residue S14 coordinates Mg(2+). Residues C95 and C129 each coordinate [4Fe-4S] cluster. Residue 180-181 (NR) coordinates ATP.

It belongs to the NifH/BchL/ChlL family. As to quaternary structure, homodimer. Protochlorophyllide reductase is composed of three subunits; ChlL, ChlN and ChlB. Requires [4Fe-4S] cluster as cofactor.

It catalyses the reaction chlorophyllide a + oxidized 2[4Fe-4S]-[ferredoxin] + 2 ADP + 2 phosphate = protochlorophyllide a + reduced 2[4Fe-4S]-[ferredoxin] + 2 ATP + 2 H2O. It participates in porphyrin-containing compound metabolism; chlorophyll biosynthesis (light-independent). Its function is as follows. Component of the dark-operative protochlorophyllide reductase (DPOR) that uses Mg-ATP and reduced ferredoxin to reduce ring D of protochlorophyllide (Pchlide) to form chlorophyllide a (Chlide). This reaction is light-independent. The L component serves as a unique electron donor to the NB-component of the complex, and binds Mg-ATP. This chain is Light-independent protochlorophyllide reductase iron-sulfur ATP-binding protein, found in Leptolyngbya boryana (Plectonema boryanum).